We begin with the raw amino-acid sequence, 259 residues long: 5'-nucleotidase SurE (259 aa).

Asp-8, Asp-9, Ser-40, and Asn-95 together coordinate a divalent metal cation.

It belongs to the SurE nucleotidase family. A divalent metal cation serves as cofactor.

It localises to the cytoplasm. It carries out the reaction a ribonucleoside 5'-phosphate + H2O = a ribonucleoside + phosphate. Functionally, nucleotidase that shows phosphatase activity on nucleoside 5'-monophosphates. This Oleidesulfovibrio alaskensis (strain ATCC BAA-1058 / DSM 17464 / G20) (Desulfovibrio alaskensis) protein is 5'-nucleotidase SurE.